The primary structure comprises 306 residues: Triplex capsid protein 2 (306 aa).

The protein belongs to the herpesviridae TRX2 protein family. In terms of assembly, interacts with TRX1 and major capisd protein/MCP.

Its subcellular location is the virion. It is found in the host nucleus. In terms of biological role, structural component of the T=16 icosahedral capsid. The capsid is composed of pentamers and hexamers of major capsid protein/MCP, which are linked together by heterotrimers called triplexes. These triplexes are formed by a single molecule of triplex protein 1/TRX1 and two copies of triplex protein 2/TRX2. Additionally, TRX1 is required for efficient transport of TRX2 to the nucleus, which is the site of capsid assembly. This is Triplex capsid protein 2 from Alcelaphine herpesvirus 1 (strain C500) (AlHV-1).